An 883-amino-acid chain; its full sequence is Phosphoenolpyruvate carboxylase (883 aa).

Catalysis depends on residues His138 and Lys546.

The protein belongs to the PEPCase type 1 family. Mg(2+) serves as cofactor.

The enzyme catalyses oxaloacetate + phosphate = phosphoenolpyruvate + hydrogencarbonate. Forms oxaloacetate, a four-carbon dicarboxylic acid source for the tricarboxylic acid cycle. The polypeptide is Phosphoenolpyruvate carboxylase (Salmonella choleraesuis (strain SC-B67)).